Reading from the N-terminus, the 560-residue chain is MFS-type transporter pgmG (560 aa).

The tract at residues 1-32 is disordered; sequence MSETVTQTETDQRPATARSLGAEEKEAKSDEQ. A compositionally biased stretch (basic and acidic residues) spans 21–31; it reads GAEEKEAKSDE. Helical transmembrane passes span 45 to 65, 84 to 104, 111 to 131, 141 to 161, 174 to 194, 201 to 221, 242 to 262, and 275 to 295; these read FIVI…NTIV, WLSV…SKIY, WLYL…GAAP, ALAG…LSVN, TGLT…GFAV, WSFY…LFML, LGTI…NFGG, and CFVV…YCIG. Asparagine 300 is a glycosylation site (N-linked (GlcNAc...) asparagine). The chain crosses the membrane as a helical span at residues 313–333; that stretch reads FIILFVQTASVATVFFVPIYF. An N-linked (GlcNAc...) asparagine glycan is attached at asparagine 343. Helical transmembrane passes span 346 to 366, 378 to 398, 409 to 429, 440 to 460, and 515 to 535; these read AIDA…AMIL, MPWY…MYTI, GYMI…FAVA, VATG…LAIA, and ISQV…LAIF.

This sequence belongs to the major facilitator superfamily. TCR/Tet family.

It is found in the membrane. Its function is as follows. MFS-type transporter; part of the gene cluster that mediates the biosynthesis of pleosporalin A, ascomycone A, as well as a third cryptic naphthoquinone derived pigment, all responsible for the coloration of conidia. Seems not to be involved in pigment biosynthesis although its expression is regulated by the cluster-specific transcription factor pgmR. The protein is MFS-type transporter pgmG of Aspergillus terreus.